The chain runs to 828 residues: Molybdenum cofactor sulfurase (828 aa).

Lys239 is modified (N6-(pyridoxal phosphate)lysine). Residue Cys402 is part of the active site. Residues 638–682 (TRYTRRSLHSRSSTAALRRQRPVEESSMPGSFPSDTPLSRTPEPP) are disordered. Residues 652-825 (AALRRQRPVE…VMVGDVVRPW (174 aa)) enclose the MOSC domain.

It belongs to the class-V pyridoxal-phosphate-dependent aminotransferase family. MOCOS subfamily. Requires pyridoxal 5'-phosphate as cofactor.

The enzyme catalyses Mo-molybdopterin + L-cysteine + AH2 = thio-Mo-molybdopterin + L-alanine + A + H2O. Sulfurates the molybdenum cofactor. Sulfation of molybdenum is essential for xanthine dehydrogenase (XDH) and aldehyde oxidase (ADO) enzymes in which molybdenum cofactor is liganded by 1 oxygen and 1 sulfur atom in active form. The sequence is that of Molybdenum cofactor sulfurase from Aspergillus terreus (strain NIH 2624 / FGSC A1156).